A 548-amino-acid chain; its full sequence is Acetylcholine receptor subunit alpha-type des-2 (548 aa).

The first 19 residues, 1–19 (MLIIIQSLLLATTASLCIA), serve as a signal peptide directing secretion. Over 21-239 (TPVPTQIRLV…LTLYLRRKPL (219 aa)) the chain is Extracellular. Asn-52, Asn-96, and Asn-224 each carry an N-linked (GlcNAc...) asparagine glycan. A run of 3 helical transmembrane segments spans residues 240-260 (FYLVNLIIPTSIITLIAIVGF), 274-294 (VSLGITTLLSMSILMLMVSDQ), and 301-321 (FIPLIGWFILAMIIVISLGTV). The interval 422–460 (LIHLSPTAHQPDESISPSAPPVPSSSPLPPPLTPGPADD) is disordered. Residues 439–455 (SAPPVPSSSPLPPPLTP) are compositionally biased toward pro residues. A helical transmembrane segment spans residues 517–537 (FVIFVVAFLIITFGINFIGFI). Residues 538–548 (HWHQAGVEYGG) lie on the Cytoplasmic side of the membrane.

The protein belongs to the ligand-gated ion channel (TC 1.A.9) family. Acetylcholine receptor (TC 1.A.9.1) subfamily. The functional receptor is a heteromer of deg-3 and des-2. Interacts with ric-3; which is required for proper receptor folding.

It localises to the cell membrane. Its function is as follows. Subunit of the non-synaptic neuronal acetylcholine receptor (AChR), which may play a role in chemotaxis towards choline. After binding choline or acetylcholine, the AChR responds by an extensive change in conformation that affects all subunits and leads to opening of an ion-conducting channel across the plasma membrane. This chain is Acetylcholine receptor subunit alpha-type des-2 (des-2), found in Caenorhabditis elegans.